The following is a 129-amino-acid chain: Copper chaperone GriE (129 aa).

A signal peptide (tat-type signal) is located at residues 1-37; it reads MPMNRREMVMATTGAALAAAAAVPLLSGGEGEGAAEA. Residues 32–51 are disordered; that stretch reads EGAAEAAAAPAKATGRGREH. Residues 34–45 are compositionally biased toward low complexity; that stretch reads AAEAAAAPAKAT.

The protein belongs to the melC1 family. Post-translationally, predicted to be exported by the Tat system. The position of the signal peptide cleavage has not been experimentally proven.

Functionally, involved in the transfer of Cu(2+) ions to the apo form of o-aminophenol oxidase GriF in the grixazone biosynthetic pathway. The chain is Copper chaperone GriE (griE) from Streptomyces griseus subsp. griseus (strain JCM 4626 / CBS 651.72 / NBRC 13350 / KCC S-0626 / ISP 5235).